We begin with the raw amino-acid sequence, 174 residues long: MSAIPENANVTVLNKNEKKARELIGKLGLKQIPGIIRVTFRKKDNQIYAIEKPEVFRSAGGNYVVFGEAKVDNFTQKLAAAQQQAQASGIMPSNEDVATKSPEDIQADMQAAAEGSVNAAAEEDDEEGEVDAGDLNKDDIELVVQQTNVSKNQAIKALKAHNGDLVNAIMSLSK.

At serine 2 the chain carries N-acetylserine. In terms of domain architecture, NAC-A/B spans 14-78; it reads NKNEKKAREL…AKVDNFTQKL (65 aa). Residues 85–137 form a disordered region; sequence AQASGIMPSNEDVATKSPEDIQADMQAAAEGSVNAAAEEDDEEGEVDAGDLNK. Position 93 is a phosphoserine (serine 93). Over residues 111-120 the composition is skewed to low complexity; the sequence is AAAEGSVNAA. Over residues 121–132 the composition is skewed to acidic residues; sequence AEEDDEEGEVDA. Positions 135-174 constitute a UBA domain; it reads LNKDDIELVVQQTNVSKNQAIKALKAHNGDLVNAIMSLSK.

It belongs to the NAC-alpha family. As to quaternary structure, part of the nascent polypeptide-associated complex (NAC), consisting of EGD2 and either EGD1 or BTT1. NAC associates with ribosomes via EGD1 or BTT1, and with the CCR4-NOT complex.

Its subcellular location is the cytoplasm. The protein localises to the nucleus. Functionally, component of the nascent polypeptide-associated complex (NAC), a dynamic component of the ribosomal exit tunnel, protecting the emerging polypeptides from interaction with other cytoplasmic proteins to ensure appropriate nascent protein targeting. The NAC complex also promotes mitochondrial protein import by enhancing productive ribosome interactions with the outer mitochondrial membrane and blocks the inappropriate interaction of ribosomes translating non-secretory nascent polypeptides with translocation sites in the membrane of the endoplasmic reticulum. EGD2 may also be involved in transcription regulation. The polypeptide is Nascent polypeptide-associated complex subunit alpha (EGD2) (Saccharomyces cerevisiae (strain YJM789) (Baker's yeast)).